Here is a 769-residue protein sequence, read N- to C-terminus: Wall-associated receptor kinase-like 10 (769 aa).

A signal peptide spans 1 to 24 (MSSNCSCSLLSLFSLLLIIDLTVA). The Extracellular portion of the chain corresponds to 25–358 (SSCPKTCGGI…YTCEYTNHRP (334 aa)). N-linked (GlcNAc...) asparagine glycosylation is found at asparagine 58, asparagine 114, asparagine 134, asparagine 182, asparagine 187, asparagine 237, asparagine 262, and asparagine 296. Residues 291–351 (CLCDYNSTTT…CVNLLGGYTC (61 aa)) are atypical EGF-like. 3 disulfide bridges follow: cysteine 293–cysteine 305, cysteine 327–cysteine 342, and cysteine 337–cysteine 351. The chain crosses the membrane as a helical span at residues 359 to 379 (LVIGLSTSFSTLVFIGGIYWL). Topologically, residues 380–769 (YKFIRRQRRL…RSDVEPLFPR (390 aa)) are cytoplasmic. One can recognise a Protein kinase domain in the interval 433–718 (FSLTRILGEG…SYSEDMQPYE (286 aa)). Residues 439–447 (LGEGGQGTV) and lysine 461 contribute to the ATP site. Tyrosine 506 carries the post-translational modification Phosphotyrosine. The active-site Proton acceptor is aspartate 559. Phosphothreonine is present on residues threonine 593 and threonine 598. A Phosphotyrosine modification is found at tyrosine 606.

The protein belongs to the protein kinase superfamily. Ser/Thr protein kinase family.

It is found in the membrane. The enzyme catalyses L-seryl-[protein] + ATP = O-phospho-L-seryl-[protein] + ADP + H(+). The catalysed reaction is L-threonyl-[protein] + ATP = O-phospho-L-threonyl-[protein] + ADP + H(+). Serine/threonine-protein kinase that may function as a signaling receptor of extracellular matrix component. The protein is Wall-associated receptor kinase-like 10 (WAKL10) of Arabidopsis thaliana (Mouse-ear cress).